A 277-amino-acid polypeptide reads, in one-letter code: Caspase-3 (277 aa).

Residue Met1 is modified to N-acetylmethionine. 2 propeptides span residues 1-9 (MENTENSVD) and 10-28 (SKSIKSLEPKIIHGSKSVD). Residue Lys11 is modified to N6-acetyllysine. At Ser26 the chain carries Phosphoserine. Active-site residues include His121 and Cys163. S-nitrosocysteine; in inhibited form is present on Cys163.

The protein belongs to the peptidase C14A family. Heterotetramer that consists of two anti-parallel arranged heterodimers, each one formed by a 17 kDa (p17) and a 12 kDa (p12) subunit. Interacts with BIRC6/bruce. Post-translationally, cleavage by granzyme B, caspase-6, caspase-8 and caspase-10 generates the two active subunits. Additional processing of the propeptides is likely due to the autocatalytic activity of the activated protease. Active heterodimers between the small subunit of caspase-7 protease and the large subunit of caspase-3 also occur and vice versa. S-nitrosylated on its catalytic site cysteine in unstimulated cell lines and denitrosylated upon activation of the Fas apoptotic pathway, associated with an increase in intracellular caspase activity. Fas therefore activates caspase-3 not only by inducing the cleavage of the caspase zymogen to its active subunits, but also by stimulating the denitrosylation of its active site thiol. In terms of processing, ubiquitinated by BIRC6; this activity is inhibited by DIABLO/SMAC.

The protein resides in the cytoplasm. The catalysed reaction is Strict requirement for an Asp residue at positions P1 and P4. It has a preferred cleavage sequence of Asp-Xaa-Xaa-Asp-|- with a hydrophobic amino-acid residue at P2 and a hydrophilic amino-acid residue at P3, although Val or Ala are also accepted at this position.. Its activity is regulated as follows. Inhibited by BIRC6; following inhibition of BIRC6-caspase binding by DIABLO/SMAC, BIRC6 is subjected to caspase cleavage, leading to an increase in active caspases. In terms of biological role, involved in the activation cascade of caspases responsible for apoptosis execution. At the onset of apoptosis, it proteolytically cleaves poly(ADP-ribose) polymerase PARP1 at a '216-Asp-|-Gly-217' bond. Cleaves and activates sterol regulatory element binding proteins (SREBPs) between the basic helix-loop-helix leucine zipper domain and the membrane attachment domain. Cleaves and activates caspase-6, -7 and -9 (CASP6, CASP7 and CASP9, respectively). Cleaves and inactivates interleukin-18 (IL18). Triggers cell adhesion in sympathetic neurons through RET cleavage. Cleaves IL-1 beta between an Asp and an Ala, releasing the mature cytokine which is involved in a variety of inflammatory processes. Cleaves and inhibits serine/threonine-protein kinase AKT1 in response to oxidative stress. Acts as an inhibitor of type I interferon production during virus-induced apoptosis by mediating cleavage of antiviral proteins CGAS, IRF3 and MAVS, thereby preventing cytokine overproduction. Also involved in pyroptosis by mediating cleavage and activation of gasdermin-E (GSDME). Cleaves XRCC4 and phospholipid scramblase proteins XKR4, XKR8 and XKR9, leading to promote phosphatidylserine exposure on apoptotic cell surface. Cleaves BIRC6 following inhibition of BIRC6-caspase binding by DIABLO/SMAC. This Macaca fascicularis (Crab-eating macaque) protein is Caspase-3 (CASP3).